Here is a 486-residue protein sequence, read N- to C-terminus: F-box protein At1g80960 (486 aa).

An F-box domain is found at 49-97 (VDWISKLPDDVLLIILSRLSTEEAIRTSVVSKRWEHVWNQMSHLVFDMR).

The protein is F-box protein At1g80960 of Arabidopsis thaliana (Mouse-ear cress).